The sequence spans 165 residues: Lipoprotein signal peptidase (165 aa).

3 helical membrane passes run 9 to 29 (LLTISFFVLIDWVTKLAVLLY), 69 to 89 (KYFLLLIRIVIILGILAFLFL), and 100 to 120 (FSLILLCSGAIGNVGDIFFYN). Catalysis depends on residues D124 and D142. Residues 133–153 (WSFPTFNFADIFISLGTLIFV) traverse the membrane as a helical segment.

This sequence belongs to the peptidase A8 family.

The protein localises to the cell inner membrane. The enzyme catalyses Release of signal peptides from bacterial membrane prolipoproteins. Hydrolyzes -Xaa-Yaa-Zaa-|-(S,diacylglyceryl)Cys-, in which Xaa is hydrophobic (preferably Leu), and Yaa (Ala or Ser) and Zaa (Gly or Ala) have small, neutral side chains.. The protein operates within protein modification; lipoprotein biosynthesis (signal peptide cleavage). Functionally, this protein specifically catalyzes the removal of signal peptides from prolipoproteins. This is Lipoprotein signal peptidase from Chlamydia felis (strain Fe/C-56) (Chlamydophila felis).